Consider the following 825-residue polypeptide: AP-3 complex subunit delta (825 aa).

10 HEAT repeats span residues 131–168 (GLAR…QYPE), 169–205 (AISA…RAPK), 207–243 (YLEF…YEPR), 244–281 (LVKK…LVGH), 285–323 (DKLA…THPS), 324–360 (LVSA…KENI), 363–400 (IVKT…KSTY), 469–513 (EKRT…LAHR), 515–547 (LLQA…LWVE), and 548–584 (KIVS…IVNT). Residues 787 to 825 (STNQGSMGDIVLETKSPIRVEKKKSKKKKKKKEKTSGKE) are disordered. Positions 807-819 (EKKKSKKKKKKKE) are enriched in basic residues.

The protein belongs to the adaptor complexes large subunit family. As to quaternary structure, adaptor protein complex 3 (AP-3) is a heterotetramer composed of 2 large adaptins (apl5 and apl6), a medium adaptin (apm3) and a small adaptin (aps3).

It is found in the golgi apparatus. The protein localises to the cytoplasmic vesicle. The protein resides in the clathrin-coated vesicle membrane. Part of the AP-3 complex, an adaptor-related complex which is not clathrin-associated. The complex is associated with the Golgi region as well as more peripheral structures. It facilitates the budding of vesicles from the Golgi membrane and may be directly involved in trafficking to the vacuole. The polypeptide is AP-3 complex subunit delta (apl5) (Schizosaccharomyces pombe (strain 972 / ATCC 24843) (Fission yeast)).